A 393-amino-acid chain; its full sequence is Endoglucanase 1 (393 aa).

The N-terminal stretch at 1 to 26 (MAFKLNIGLLALSLSLSLVHLDGVRA) is a signal peptide. Residue aspartate 34 is the Nucleophile of the active site. Aspartate 152 acts as the Proton donor in catalysis. Residues 233-393 (GCQRKDDNTI…GGHKKCHKKH (161 aa)) form a disordered region. 2 stretches are compositionally biased toward low complexity: residues 319 to 329 (QGSSNGDATTG) and 337 to 370 (DSGS…NPGA). N-linked (GlcNAc...) asparagine glycosylation is present at asparagine 343. A compositionally biased stretch (gly residues) spans 371-384 (AQGGQGGAQPGPSG).

The protein belongs to the glycosyl hydrolase 45 (cellulase K) family. In terms of processing, may also be O-glycosylated. In terms of tissue distribution, hyphal tip.

Its subcellular location is the secreted. The catalysed reaction is Endohydrolysis of (1-&gt;4)-beta-D-glucosidic linkages in cellulose, lichenin and cereal beta-D-glucans.. In Mycosarcoma maydis (Corn smut fungus), this protein is Endoglucanase 1 (EGL1).